Here is a 506-residue protein sequence, read N- to C-terminus: U3 small nucleolar RNA-associated protein 18 homolog (506 aa).

Over residues 1-11 the composition is skewed to acidic residues; the sequence is MSSDESSDGLE. Disordered stretches follow at residues 1 to 44 and 69 to 126; these read MSSD…SQAK and AKSV…PLNH. Positions 24 to 37 are enriched in basic and acidic residues; it reads EQEKPAKIKRERYI. Phosphoserine is present on residues S102, S104, S164, and S165. 4 WD repeats span residues 203–242, 331–370, 372–413, and 469–505; these read YAEG…NERL, KQEG…IEHI, MDDG…ASKA, and EKVG…YFKG.

The protein belongs to the WD repeat UTP18 family. In terms of assembly, component of U3 snoRNP complex.

It is found in the nucleus. The protein resides in the nucleolus. Functionally, component of a nucleolar small nuclear ribonucleoprotein particle (snoRNP) thought to participate in the processing and modification of pre-ribosomal RNA. Regulation of cell size by ribosome synthesis is an important parameter for stem cell maintenance and function. This is U3 small nucleolar RNA-associated protein 18 homolog (wcd) from Drosophila melanogaster (Fruit fly).